The following is a 209-amino-acid chain: Uracil phosphoribosyltransferase (209 aa).

5-phospho-alpha-D-ribose 1-diphosphate is bound by residues Arg79, Arg104, and 131–139; that span reads DPMLATGGS. Uracil is bound by residues Ile194 and 199–201; that span reads GDA. Asp200 lines the 5-phospho-alpha-D-ribose 1-diphosphate pocket.

The protein belongs to the UPRTase family. Mg(2+) is required as a cofactor.

The catalysed reaction is UMP + diphosphate = 5-phospho-alpha-D-ribose 1-diphosphate + uracil. The protein operates within pyrimidine metabolism; UMP biosynthesis via salvage pathway; UMP from uracil: step 1/1. Its activity is regulated as follows. Allosterically activated by GTP. Catalyzes the conversion of uracil and 5-phospho-alpha-D-ribose 1-diphosphate (PRPP) to UMP and diphosphate. The chain is Uracil phosphoribosyltransferase from Anoxybacillus flavithermus (strain DSM 21510 / WK1).